The chain runs to 330 residues: ADP-L-glycero-D-manno-heptose-6-epimerase (330 aa).

Residues phenylalanine 11–isoleucine 12, aspartate 32–asparagine 33, lysine 39, lysine 54, glutamate 75–serine 79, and asparagine 92 each bind NADP(+). The active-site Proton acceptor is tyrosine 139. Lysine 143 contributes to the NADP(+) binding site. Residue asparagine 168 participates in substrate binding. Residues valine 169 and lysine 177 each coordinate NADP(+). Lysine 177 acts as the Proton acceptor in catalysis. Substrate contacts are provided by residues arginine 179, histidine 186, phenylalanine 200–tyrosine 203, arginine 213, and tyrosine 292.

It belongs to the NAD(P)-dependent epimerase/dehydratase family. HldD subfamily. Homopentamer. The cofactor is NADP(+).

It catalyses the reaction ADP-D-glycero-beta-D-manno-heptose = ADP-L-glycero-beta-D-manno-heptose. It participates in nucleotide-sugar biosynthesis; ADP-L-glycero-beta-D-manno-heptose biosynthesis; ADP-L-glycero-beta-D-manno-heptose from D-glycero-beta-D-manno-heptose 7-phosphate: step 4/4. Catalyzes the interconversion between ADP-D-glycero-beta-D-manno-heptose and ADP-L-glycero-beta-D-manno-heptose via an epimerization at carbon 6 of the heptose. This Burkholderia mallei (strain NCTC 10247) protein is ADP-L-glycero-D-manno-heptose-6-epimerase.